The following is a 270-amino-acid chain: Orotidine 5'-phosphate decarboxylase (270 aa).

Residues Asp39, 61–63, 93–102, Tyr221, and Arg239 each bind substrate; these read KTH and DRKFADIGNT. Lys95 serves as the catalytic Proton donor.

The protein belongs to the OMP decarboxylase family.

It catalyses the reaction orotidine 5'-phosphate + H(+) = UMP + CO2. Its pathway is pyrimidine metabolism; UMP biosynthesis via de novo pathway; UMP from orotate: step 2/2. The polypeptide is Orotidine 5'-phosphate decarboxylase (URA3) (Candida albicans (strain SC5314 / ATCC MYA-2876) (Yeast)).